Consider the following 176-residue polypeptide: Ribosome maturation factor RimM (176 aa).

A PRC barrel domain is found at 96–176; the sequence is PADEFYWRDL…QILVDWDPDF (81 aa).

This sequence belongs to the RimM family. In terms of assembly, binds ribosomal protein uS19.

It localises to the cytoplasm. In terms of biological role, an accessory protein needed during the final step in the assembly of 30S ribosomal subunit, possibly for assembly of the head region. Essential for efficient processing of 16S rRNA. May be needed both before and after RbfA during the maturation of 16S rRNA. It has affinity for free ribosomal 30S subunits but not for 70S ribosomes. In Shewanella baltica (strain OS223), this protein is Ribosome maturation factor RimM.